The chain runs to 680 residues: MLRVNLLILLCFVPFSLNNPLPTLPPDTANAYLRSFLPWWPNNTDFSLRAAPTPSESENSTEAVLLGAEYENGTDSTTGNQEDLDPATLRVQALPDSPLDALSPENAPKSFVSESMNHHDGNFIINFDEMGECPRDCSNDLREALGIVLQDMSHVERYHRICEKYSNASTCVNEDGRCDKDDRGMFEMMTSGLHYMCVEQELAFNATIKCIDDEAGLVQSECDAQCQTKNLFMNWMMRTAFQDTIQQGVNGIVGAATGTNANPLAFLQGAEGAAGGTPTGWADMLATVEQRPPSPQDAQQGFENFRQFTNDLCRIGDCMLDCIRSKFNTRCEGSAGTLLSEVFVRPIAASQNKLSILRPVLGSFMPEQCNYLTNNADLKKHRIDSTMDEELKRMYAEKMAKEIRDRNAQDELLSNLVPLDENGVPLPRALPELKSVDSPLDVSVKTLDQLILDMYSKNETKKAETTKKSYPNTTTVAPKNDDQAANTTAETTKTTSANITHVETTTLGNPKTEEVLSDVSLDTSGNNSTVADSGEGSAEGAGEGTEEDAEYSGSGNESTTEEEYSGSEEVSATDEGHPLAADESNEGLLTGSGEPAEEASGTGNSSVEGSGSGLDSLRSYIETSGEASGGAPGEASGEASGEASGEVSGEEEFSGYSGESPGENESSGEVPLTTTLHELY.

Positions 1–18 (MLRVNLLILLCFVPFSLN) are cleaved as a signal peptide. 13 N-linked (GlcNAc...) asparagine glycosylation sites follow: Asn42, Asn59, Asn72, Asn167, Asn205, Asn458, Asn472, Asn486, Asn498, Asn526, Asn527, Asn556, and Asn604. Residues 460-680 (TKKAETTKKS…PLTTTLHELY (221 aa)) form a disordered region. Low complexity predominate over residues 484–500 (AANTTAETTKTTSANIT). Residues 520–530 (SLDTSGNNSTV) show a composition bias toward polar residues. Composition is skewed to low complexity over residues 633–647 (GEAS…SGEV) and 654–669 (SGYS…SSGE). O-linked (Xyl...) (chondroitin sulfate) serine glycosylation is found at Ser640 and Ser644. Asn664 carries an N-linked (GlcNAc...) asparagine glycan.

The protein is Chondroitin proteoglycan 4 (cpg-4) of Caenorhabditis briggsae.